The primary structure comprises 113 residues: Gamma-glutamylcyclotransferase family protein YtfP (113 aa).

Belongs to the gamma-glutamylcyclotransferase family.

In Escherichia coli O157:H7, this protein is Gamma-glutamylcyclotransferase family protein YtfP (ytfP).